Reading from the N-terminus, the 390-residue chain is Methylthioribose-1-phosphate isomerase (390 aa).

Substrate is bound by residues Arg53 to Ala55, Arg90, and Gln207. Asp248 functions as the Proton donor in the catalytic mechanism. Position 258–259 (Asn258–Lys259) interacts with substrate.

It belongs to the EIF-2B alpha/beta/delta subunits family. MtnA subfamily.

It catalyses the reaction 5-(methylsulfanyl)-alpha-D-ribose 1-phosphate = 5-(methylsulfanyl)-D-ribulose 1-phosphate. It carries out the reaction 5-deoxy-alpha-D-ribose 1-phosphate = 5-deoxy-D-ribulose 1-phosphate. It participates in amino-acid biosynthesis; L-methionine biosynthesis via salvage pathway; L-methionine from S-methyl-5-thio-alpha-D-ribose 1-phosphate: step 1/6. Catalyzes the interconversion of methylthioribose-1-phosphate (MTR-1-P) into methylthioribulose-1-phosphate (MTRu-1-P). Also catalyzes the interconversion of 5-deoxyribose 1-phosphate and 5-deoxyribulose 1-phosphate. Part of a bifunctional DHAP-shunt salvage pathway for SAM by-products. This is Methylthioribose-1-phosphate isomerase from Rhodospirillum rubrum (strain ATCC 11170 / ATH 1.1.1 / DSM 467 / LMG 4362 / NCIMB 8255 / S1).